The primary structure comprises 404 residues: Glucose-1-phosphate adenylyltransferase (404 aa).

Alpha-D-glucose 1-phosphate contacts are provided by residues Y99, G164, 179–180, and S197; that span reads EK.

Belongs to the bacterial/plant glucose-1-phosphate adenylyltransferase family.

It carries out the reaction alpha-D-glucose 1-phosphate + ATP + H(+) = ADP-alpha-D-glucose + diphosphate. Its pathway is capsule biogenesis; capsule polysaccharide biosynthesis. The protein operates within glycan biosynthesis; glycogen biosynthesis. Involved in the biosynthesis of ADP-glucose, a building block, required in the biosynthesis of maltose-1-phosphate (M1P) and in the elongation reactions to produce linear alpha-1,4-glucans. Catalyzes the reaction between ATP and alpha-D-glucose 1-phosphate (G1P) to produce pyrophosphate and ADP-Glc. The protein is Glucose-1-phosphate adenylyltransferase of Mycobacterium marinum (strain ATCC BAA-535 / M).